A 109-amino-acid chain; its full sequence is Spermidine export protein MdtI (109 aa).

Transmembrane regions (helical) follow at residues 6–26 (FYHI…NILL), 35–55 (VWLG…LAQA), 64–84 (AYAL…WILF), and 88–108 (LNYK…MIKL).

It belongs to the drug/metabolite transporter (DMT) superfamily. Small multidrug resistance (SMR) (TC 2.A.7.1) family. MdtI subfamily. In terms of assembly, forms a complex with MdtJ.

It localises to the cell inner membrane. In terms of biological role, catalyzes the excretion of spermidine. The sequence is that of Spermidine export protein MdtI from Yersinia enterocolitica serotype O:8 / biotype 1B (strain NCTC 13174 / 8081).